Reading from the N-terminus, the 508-residue chain is BTB/POZ domain-containing protein At3g03510 (508 aa).

In terms of domain architecture, BTB spans 11–77 (QDLDLYVKGV…CYGYKIELSA (67 aa)). Residues 156–414 (TRLLQDLITL…MQVLFVSQMQ (259 aa)) enclose the NPH3 domain. Tyr355 carries the post-translational modification Phosphotyrosine.

Belongs to the NPH3 family.

Its pathway is protein modification; protein ubiquitination. In terms of biological role, may act as a substrate-specific adapter of an E3 ubiquitin-protein ligase complex (CUL3-RBX1-BTB) which mediates the ubiquitination and subsequent proteasomal degradation of target proteins. The polypeptide is BTB/POZ domain-containing protein At3g03510 (Arabidopsis thaliana (Mouse-ear cress)).